Consider the following 475-residue polypeptide: MSPKTETKASVGFKAGVKDYRLTYYTPEYQTKDTDILAAFRVTPQPGVPAEEAGAAVAAESSTGTWTTVWTDGLTSLDRYKGRCYDIEPVPGEENQFIAYVAYPLDLFEEGSVTNLFTSIVGNVFGFKALRALRLEDLRIPPAYSKTFQGPPHGIQVERDKLNKYGRPLLGCTIKPKLGLSAKNYGRAVYECLRGGLDFTKDDENVNSQPFMRWRDRFVFCAEAINKAQAETGEIKGHYLNATAGTCEEMMKRAVFARELGVPIVMHDYLTGGFTANTSLAHYCRDNGLLLHIHRAMHAVIDRQRNHGMHFRVLAKALRMSGGDHVHAGTVVGKLEGERDVTLGFVDLLRDDFIEKDRSRGVYFTQDWVSMPGVLPVASGGIHVWHMPALTEIFGDDSVLQFGGGTLGHPWGNAPGAAANRVALEACVQARNEGRDLAREGNEVIREACKWSPELAAACEIWKEIKFEFDVIDRL.

A propeptide spanning residues Met1–Ser2 is cleaved from the precursor. Residue Pro3 is modified to N-acetylproline. N6,N6,N6-trimethyllysine is present on Lys14. Positions 123 and 173 each coordinate substrate. Residue Lys175 is the Proton acceptor of the active site. A substrate-binding site is contributed by Lys177. Mg(2+)-binding residues include Lys201, Asp203, and Glu204. Lys201 carries the post-translational modification N6-carboxylysine. The active-site Proton acceptor is the His294. Substrate-binding residues include Arg295, His327, and Ser379.

This sequence belongs to the RuBisCO large chain family. Type I subfamily. As to quaternary structure, heterohexadecamer of 8 large chains and 8 small chains; disulfide-linked. The disulfide link is formed within the large subunit homodimers. Requires Mg(2+) as cofactor. Post-translationally, the disulfide bond which can form in the large chain dimeric partners within the hexadecamer appears to be associated with oxidative stress and protein turnover.

The protein resides in the plastid. It is found in the chloroplast. It carries out the reaction 2 (2R)-3-phosphoglycerate + 2 H(+) = D-ribulose 1,5-bisphosphate + CO2 + H2O. The catalysed reaction is D-ribulose 1,5-bisphosphate + O2 = 2-phosphoglycolate + (2R)-3-phosphoglycerate + 2 H(+). RuBisCO catalyzes two reactions: the carboxylation of D-ribulose 1,5-bisphosphate, the primary event in carbon dioxide fixation, as well as the oxidative fragmentation of the pentose substrate in the photorespiration process. Both reactions occur simultaneously and in competition at the same active site. This Pinus koraiensis (Korean pine) protein is Ribulose bisphosphate carboxylase large chain.